Reading from the N-terminus, the 367-residue chain is Anhydro-N-acetylmuramic acid kinase (367 aa).

13-20 (GTSMDGAD) is an ATP binding site.

It belongs to the anhydro-N-acetylmuramic acid kinase family.

It carries out the reaction 1,6-anhydro-N-acetyl-beta-muramate + ATP + H2O = N-acetyl-D-muramate 6-phosphate + ADP + H(+). Its pathway is amino-sugar metabolism; 1,6-anhydro-N-acetylmuramate degradation. It participates in cell wall biogenesis; peptidoglycan recycling. Catalyzes the specific phosphorylation of 1,6-anhydro-N-acetylmuramic acid (anhMurNAc) with the simultaneous cleavage of the 1,6-anhydro ring, generating MurNAc-6-P. Is required for the utilization of anhMurNAc either imported from the medium or derived from its own cell wall murein, and thus plays a role in cell wall recycling. The polypeptide is Anhydro-N-acetylmuramic acid kinase (Neisseria meningitidis serogroup A / serotype 4A (strain DSM 15465 / Z2491)).